We begin with the raw amino-acid sequence, 548 residues long: Probable malate:quinone oxidoreductase (548 aa).

It belongs to the MQO family. FAD is required as a cofactor.

The catalysed reaction is (S)-malate + a quinone = a quinol + oxaloacetate. Its pathway is carbohydrate metabolism; tricarboxylic acid cycle; oxaloacetate from (S)-malate (quinone route): step 1/1. This chain is Probable malate:quinone oxidoreductase, found in Escherichia coli O6:H1 (strain CFT073 / ATCC 700928 / UPEC).